Consider the following 512-residue polypeptide: GMP synthase [glutamine-hydrolyzing] (512 aa).

The Glutamine amidotransferase type-1 domain occupies 7–197; the sequence is LVLVVDFGGQ…LFKVAGLKAD (191 aa). Cys84 functions as the Nucleophile in the catalytic mechanism. Active-site residues include His171 and Glu173. The GMPS ATP-PPase domain maps to 198-387; it reads WSMASFAEEK…LGIPHKLVWR (190 aa). ATP is bound at residue 225–231; that stretch reads SGGVDSS.

In terms of assembly, homodimer.

It catalyses the reaction XMP + L-glutamine + ATP + H2O = GMP + L-glutamate + AMP + diphosphate + 2 H(+). It functions in the pathway purine metabolism; GMP biosynthesis; GMP from XMP (L-Gln route): step 1/1. In terms of biological role, catalyzes the synthesis of GMP from XMP. This Clostridium novyi (strain NT) protein is GMP synthase [glutamine-hydrolyzing].